The primary structure comprises 194 residues: Holliday junction branch migration complex subunit RuvA (194 aa).

The interval 1-64 (MIGRLRGVLT…DDSAALYGFL (64 aa)) is domain I. The segment at 65–140 (SESERRLFRH…RAADFNNGIS (76 aa)) is domain II. The tract at residues 140–144 (STSGK) is flexible linker. Residues 145–194 (LNLDTVSEAALALQQLGYKPAEAARMARDAGTESDDVATVIKKALQAALC) form a domain III region.

Belongs to the RuvA family. As to quaternary structure, homotetramer. Forms an RuvA(8)-RuvB(12)-Holliday junction (HJ) complex. HJ DNA is sandwiched between 2 RuvA tetramers; dsDNA enters through RuvA and exits via RuvB. An RuvB hexamer assembles on each DNA strand where it exits the tetramer. Each RuvB hexamer is contacted by two RuvA subunits (via domain III) on 2 adjacent RuvB subunits; this complex drives branch migration. In the full resolvosome a probable DNA-RuvA(4)-RuvB(12)-RuvC(2) complex forms which resolves the HJ.

Its subcellular location is the cytoplasm. In terms of biological role, the RuvA-RuvB-RuvC complex processes Holliday junction (HJ) DNA during genetic recombination and DNA repair, while the RuvA-RuvB complex plays an important role in the rescue of blocked DNA replication forks via replication fork reversal (RFR). RuvA specifically binds to HJ cruciform DNA, conferring on it an open structure. The RuvB hexamer acts as an ATP-dependent pump, pulling dsDNA into and through the RuvAB complex. HJ branch migration allows RuvC to scan DNA until it finds its consensus sequence, where it cleaves and resolves the cruciform DNA. This Xylella fastidiosa (strain M12) protein is Holliday junction branch migration complex subunit RuvA.